We begin with the raw amino-acid sequence, 98 residues long: Complement inhibitor RaCI2 (98 aa).

The first 21 residues, methionine 1–serine 21, serve as a signal peptide directing secretion. 3 disulfide bridges follow: cysteine 35-cysteine 59, cysteine 40-cysteine 61, and cysteine 55-cysteine 76.

Belongs to the RaCI family. Expressed in salivary glands.

It is found in the secreted. Functionally, complement inhibitor. Prevents complement-mediated C5 activation by binding to C5. Binds C5 at a different binding site than the other tick complement inhibitors OmCI and CirpT1, and the drug eculizumab. The polypeptide is Complement inhibitor RaCI2 (Rhipicephalus microplus (Cattle tick)).